Consider the following 408-residue polypeptide: MSPCENDTPINWKRNLIVAWLGCFLTGAAFSLVMPFLPLYVEQLGVTGHSALNMWSGIVFSITFLFSAIASPFWGGLADRKGRKLMLLRSALGMGIVMVLMGLAQNIWQFLILRALLGLLGGFVPNANALIATQVPRNKSGWALGTLSTGGVSGALLGPMAGGLLADSYGLRPVFFITASVLILCFFVTLFCIREKFQPVSKKEMLHMREVVTSLKKPKLVLSLFVTTLIIQVATGSIAPILTLYVRELAGNVSNVAFISGMIASVPGVAALLSAPRLGKLGDRIGPEKILITALIFSVLLLIPMSYVQTPLQLGILRFLLGAADGALLPAVQTLLVYNSSNQIAGRIFSYNQSFRDIGNVTGPLMGAAISANYGFRAVFLVTAGVVLFNAVYSWNSLRRRRIPQVSN.

The next 10 membrane-spanning stretches (helical) occupy residues 16 to 36 (LIVA…VMPF), 58 to 78 (IVFS…GGLA), 92 to 112 (LGMG…QFLI), 115 to 135 (ALLG…ATQV), 146 to 166 (TLST…GLLA), 173 to 193 (PVFF…LFCI), 224 to 244 (LFVT…ILTL), 256 to 276 (VAFI…LSAP), 290 to 310 (ILIT…YVQT), and 378 to 398 (AVFL…WNSL).

Belongs to the major facilitator superfamily. DHA1 family. MdtG (TC 2.A.1.2.20) subfamily.

The protein localises to the cell inner membrane. In terms of biological role, confers resistance to fosfomycin and deoxycholate. The sequence is that of Multidrug resistance protein MdtG from Escherichia coli O17:K52:H18 (strain UMN026 / ExPEC).